The sequence spans 604 residues: MGYSVVAGAAGRLLFGYDSFGNVCGKRNSPVEGAPLSGQDMTLKKHVFFMNACNLEVKDRGRGPMALCVSSCPEKQLDTLEEVQLFANINGSFLCVYSLNSFNYTQSPSADRLCPRLPVPPSKPFPLFNRCIPQTPECYSLFASVLLNDADALHRILSGIMAGRDTILGLCAFVFALSLAMLFTFRFISTLLVHIIISLVILGLLFVCGVFWWLYYDYTNDLSTELDTEKENMKCMLAFAVITTVVTVVLLALIFTLRKRVKLTVELLRVTNKAISRCPFLLLQPLWTFAILVFFWVLWVAVLLSLGTAGTAQVMEGGQVEYKPLSGIRYLWWYHLIGLIWTSEFILTCQRMTVAGAMVTCYFNRNQNDPPARPILSSLSTLFCYHQGTAVKGSLLLTVTRIPRVIFMYIYSTVKERHSAWPRGEFRCSYCGLWCLTNYPYHLNQDAYAAAAINGTDFCTSAKDAHTIISKNSSHLTSVNCFGNFIIFLGKVLVVCFSVFGGLMAFNYNRALQVWAIPLLLVAFFAYLAAHSFLSVFETVLDTLFLCFAVDLETNDGSSEKPYFMDPGFLSFVKRTDHFNNARSQGHKNSLPNEEGTELRPIVR.

2 N-linked (GlcNAc...) asparagine glycosylation sites follow: Asn90 and Asn103. Transmembrane regions (helical) follow at residues 165 to 185 (DTIL…LFTF), 195 to 215 (IIIS…WWLY), 237 to 257 (LAFA…IFTL), 286 to 306 (LWTF…LLSL), and 330 to 350 (YLWW…LTCQ). Residues Asn454 and Asn472 are each glycosylated (N-linked (GlcNAc...) asparagine). 2 consecutive transmembrane segments (helical) span residues 485-505 (FIIF…GLMA) and 514-534 (VWAI…HSFL). Polar residues predominate over residues 581–592 (NARSQGHKNSLP). The tract at residues 581–604 (NARSQGHKNSLPNEEGTELRPIVR) is disordered.

It belongs to the CTL (choline transporter-like) family. Expressed in colon, kidney and ileum.

It is found in the membrane. The polypeptide is Choline transporter-like protein 3 (Slc44a3) (Rattus norvegicus (Rat)).